Reading from the N-terminus, the 369-residue chain is Homoserine O-succinyltransferase (369 aa).

Residues Gly90–Ala93 are important for substrate specificity. Residues Trp107–Asp353 form the AB hydrolase-1 domain. Ser175 acts as the Nucleophile in catalysis. Arg236 serves as a coordination point for substrate. Catalysis depends on residues Asp316 and His346. Asp347 is a binding site for substrate.

It belongs to the AB hydrolase superfamily. MetX family. In terms of assembly, homodimer.

It is found in the cytoplasm. The catalysed reaction is L-homoserine + succinyl-CoA = O-succinyl-L-homoserine + CoA. It functions in the pathway amino-acid biosynthesis; L-methionine biosynthesis via de novo pathway; O-succinyl-L-homoserine from L-homoserine: step 1/1. Transfers a succinyl group from succinyl-CoA to L-homoserine, forming succinyl-L-homoserine. This is Homoserine O-succinyltransferase from Brevundimonas diminuta (strain ATCC 11568 / DSM 7234 / NBRC 12697 / NCIMB 9393 / NCTC 8545).